The following is a 2527-amino-acid chain: Neurogenic locus notch homolog protein 1 (2527 aa).

A signal peptide spans 1–36; sequence MGRSDSRAGALLEGGCEQNIDPRRAAHCHHPRLATS. Over 37–1741 the chain is Extracellular; it reads SLRCSQPSGT…VEPPLPSQLH (1705 aa). 33 disulfides stabilise this stretch: Cys40–Cys53, Cys47–Cys62, Cys64–Cys73, Cys79–Cys90, Cys84–Cys103, Cys105–Cys114, Cys122–Cys133, Cys127–Cys143, Cys145–Cys154, Cys160–Cys171, Cys165–Cys180, Cys182–Cys191, Cys198–Cys211, Cys205–Cys220, Cys222–Cys231, Cys238–Cys249, Cys243–Cys259, Cys261–Cys270, Cys277–Cys288, Cys282–Cys297, Cys299–Cys308, Cys315–Cys328, Cys322–Cys337, Cys339–Cys348, Cys355–Cys366, Cys360–Cys375, Cys377–Cys386, Cys392–Cys403, Cys397–Cys414, Cys416–Cys425, Cys432–Cys445, Cys439–Cys454, and Cys456–Cys465. The N-linked (GlcNAc...) asparagine glycan is linked to Asn57. 3 consecutive EGF-like domains span residues 75-115, 118-155, and 156-192; these read DPNP…PLCL, LDNA…KSCQ, and QADP…PTCR. The O-linked (Glc...) serine glycan is linked to Ser81. O-linked (Fuc...) threonine glycosylation is present at Thr89. A glycan (O-linked (Fuc...) threonine) is linked at Thr132. Residue Ser162 is glycosylated (O-linked (Glc...) serine). Positions 194 to 232 constitute an EGF-like 4; calcium-binding domain; that stretch reads DVNECSQNPGLCRHGGTCHNEIGSYRCVCRATHTGPHCE. An O-linked (Fuc...) threonine glycan is attached at Thr210. One can recognise an EGF-like 5 domain in the interval 234–271; sequence PYVPCSPSPCQNGGTCRPTGDTTHECACLPGFAGQNCE. A glycan (O-linked (Fuc...) threonine; alternate) is linked at Thr248. Residue Thr248 is glycosylated (O-linked (GalNAc...) threonine; alternate). One can recognise an EGF-like 6; calcium-binding domain in the interval 273–309; sequence NVDDCPGNNCKNGGACVDGVNTYNCRCPPEWTGQYCT. An EGF-like 7; calcium-binding domain is found at 311–349; sequence DVDECQLMPNACQNGGTCHNTHGGYNCVCVNGWTGEDCS. An O-linked (Fuc...) threonine glycan is attached at Thr327. The 37-residue stretch at 351 to 387 folds into the EGF-like 8; calcium-binding domain; it reads NIDDCASAACFQGATCHDRVASFYCECPHGRTGLLCH. O-linked (Glc...) serine glycosylation is present at Ser357. The O-linked (Fuc...) threonine glycan is linked to Thr365. Residues 388-426 enclose the EGF-like 9 domain; that stretch reads LNDACISNPCNEGSNCDTNPVNGKAICTCPSGYTGPACS. O-linked (Glc...) serine glycosylation occurs at Ser394. Residues 428–466 form the EGF-like 10; calcium-binding domain; it reads DVDECALGANPCEHAGKCLNTLGSFECQCLQGYTGPRCE. The segment at 436–437 is interaction with DLL4; the sequence is AN. Residues Thr448 and Ser451 each contribute to the Ca(2+) site. O-linked (Glc...) serine glycosylation is present at Ser451. Residues 464 to 468 are interaction with DLL4; it reads RCEID. Ca(2+) contacts are provided by Asp468, Val469, and Glu471. In terms of domain architecture, EGF-like 11; calcium-binding spans 468-504; it reads DVNECISNPCQNDATCLDQIGEFQCICMPGYEGVYCE. Disulfide bonds link Cys472–Cys483, Cys477–Cys492, and Cys494–Cys503. O-linked (Glc...) serine glycosylation occurs at Ser474. An O-linked (Fuc...) threonine glycan is attached at Thr482. Ca(2+) is bound by residues Asp485 and Gln486. Residues Asn506, Thr507, and Glu509 each contribute to the Ca(2+) site. The EGF-like 12; calcium-binding domain maps to 506–542; it reads NTDECASSPCLHNGHCMDKINEFLCQCPKGFSGHLCQ. Cystine bridges form between Cys510/Cys521, Cys515/Cys530, Cys532/Cys541, Cys548/Cys559, Cys553/Cys568, Cys570/Cys579, Cys586/Cys596, Cys591/Cys605, Cys607/Cys616, Cys623/Cys634, Cys628/Cys643, Cys645/Cys654, Cys661/Cys671, Cys666/Cys680, Cys682/Cys691, Cys698/Cys709, Cys703/Cys718, Cys720/Cys729, Cys736/Cys746, Cys741/Cys755, Cys757/Cys766, Cys773/Cys784, Cys778/Cys793, Cys795/Cys804, Cys811/Cys822, Cys816/Cys831, Cys833/Cys842, and Cys849/Cys860. A glycan (O-linked (Glc...) serine) is linked at Ser512. Asp523 and Lys524 together coordinate Ca(2+). The EGF-like 13; calcium-binding domain maps to 544-580; that stretch reads DVDECASTPCKNGAKCLDGPNTYTCVCTEGYTGTHCE. An O-linked (Glc...) serine glycan is attached at Ser550. The 36-residue stretch at 582-617 folds into the EGF-like 14; calcium-binding domain; the sequence is DIDECDPDPCHYGFCKDGVATFTCLCQPGYTGHHCE. The EGF-like 15; calcium-binding domain maps to 619–655; the sequence is NINECHSQPCRHGGTCQDRDNSYLCLCLKGTTGPNCE. An O-linked (Glc...) serine glycan is attached at Ser625. Thr633 carries O-linked (Fuc...) threonine glycosylation. Residues 657–692 enclose the EGF-like 16; calcium-binding domain; sequence NLDDCASNPCDSGTCLDKIDGYECACEPGYTGSMCN. Ser663 carries an O-linked (Glc...) serine glycan. The region spanning 694 to 730 is the EGF-like 17; calcium-binding domain; it reads NIDECAGSPCHNGGTCEDGIAGFTCRCPEGYHDPTCL. Thr708 carries an O-linked (Fuc...) threonine glycan. Residues 732–767 enclose the EGF-like 18; calcium-binding domain; that stretch reads EVNECNSNPCIHGACRDGLNGYKCDCAPGWSGTNCD. Ser738 is a glycosylation site (O-linked (Glc...) serine). The EGF-like 19 domain maps to 769 to 805; it reads NNNECESNPCVNGGTCKDMTSGYVCTCREGFSGPNCQ. Ser775 carries O-linked (Glc...) serine glycosylation. O-linked (Fuc...) threonine glycosylation is present at Thr783. An O-linked (GlcNAc) serine glycan is attached at Ser800. An EGF-like 20; calcium-binding domain is found at 807-843; the sequence is NINECASNPCLNQGTCIDDVAGYKCNCPLPYTGATCE. The O-linked (Glc...) serine glycan is linked to Ser813. The O-linked (Fuc...) threonine glycan is linked to Thr821. The EGF-like 21 domain maps to 845–883; sequence VLAPCATSPCKNSGVCKESEDYESFSCVCPTGWQGQTCE. Positions 885–921 constitute an EGF-like 22; calcium-binding domain; sequence DINECVKSPCRHGASCQNTNGSYRCLCQAGYTGRNCE. Asn904 is a glycosylation site (N-linked (GlcNAc...) asparagine). The O-linked (GlcNAc) threonine glycan is linked to Thr916. The EGF-like 23 domain occupies 923–959; it reads DIDDCRPNPCHNGGSCTDGINMAFCDCLPGFQGAFCE. An O-linked (Fuc) serine glycan is attached at Ser937. In terms of domain architecture, EGF-like 24; calcium-binding spans 961–997; the sequence is DINECASNPCRNGANCTDCVDSYTCTCPAGFNGIHCE. Residue Ser967 is glycosylated (O-linked (Glc...) serine). A glycan (N-linked (GlcNAc...) asparagine) is linked at Asn975. EGF-like domains lie at 999–1035, 1037–1073, 1075–1111, 1113–1159, and 1161–1197; these read NTPD…SYCQ, DVNE…LNCQ, LVHW…FNCD, LSVS…SYCE, and EVDE…SNCS. An O-linked (Fuc...) threonine glycan is attached at Thr1013. O-linked (Glc...) serine glycosylation occurs at Ser1043. Thr1051 carries O-linked (Fuc...) threonine glycosylation. Ser1081 carries an O-linked (Glc...) serine glycan. Cys1117 and Cys1138 are joined by a disulfide. Residue Thr1175 is glycosylated (O-linked (Fuc...) threonine). The N-linked (GlcNAc...) asparagine glycan is linked to Asn1195. One can recognise an EGF-like 30; calcium-binding domain in the interval 1199–1235; that stretch reads EINECLSQPCQNGGTCIDLTNTYKCSCPRGTQGVHCE. Ser1205 carries O-linked (Glc...) serine glycosylation. O-linked (Fuc...) threonine glycosylation occurs at Thr1213. An EGF-like 31; calcium-binding domain is found at 1237-1281; that stretch reads NVDDCHPHLDPASRSPKCFNNGTCVDQVGGYSCTCPPGFVGERCE. Residue Asn1257 is glycosylated (N-linked (GlcNAc...) asparagine). 4 EGF-like domains span residues 1283-1321, 1323-1362, 1364-1400, and 1403-1442; these read DINE…RRCE, VING…ATCE, DART…PECQ, and ASSP…LLCH. O-linked (Glc...) serine glycosylation is present at Ser1289. Thr1378 carries O-linked (Fuc...) threonine glycosylation. Thr1395 carries an O-linked (GlcNAc...) threonine glycan. Thr1418 carries an O-linked (Fuc...) threonine; alternate glycan. The O-linked (GalNAc...) threonine; alternate glycan is linked to Thr1418. 3 LNR repeats span residues 1465–1505, 1506–1547, and 1548–1587; these read CELP…PWKN, CTQS…CNPL, and YDQY…RLAA. Residues Asp1473, Asn1476, Asp1491, and Asp1494 each coordinate Ca(2+). An N-linked (GlcNAc...) asparagine glycan is attached at Asn1505. The N-linked (GlcNAc...) asparagine glycan is linked to Asn1603. The O-linked (GalNAc...) threonine glycan is linked to Thr1731. The interaction with PSEN1 stretch occupies residues 1734–1766; the sequence is PPLPSQLHLMYLAAAAFVLLFFVGCGVLLSRKR. Residues 1742 to 1762 traverse the membrane as a helical segment; that stretch reads LMYLAAAAFVLLFFVGCGVLL. The Cytoplasmic portion of the chain corresponds to 1763–2527; that stretch reads SRKRRRQHGQ…QITHIPEAFK (765 aa). Residue Lys1765 forms a Glycyl lysine isopeptide (Lys-Gly) (interchain with G-Cter in ubiquitin) linkage. A disordered region spans residues 1786–1814; that stretch reads KKKRREPLGEDSVGLKPLKNASDGALMDD. The residue at position 1867 (Thr1867) is a Phosphothreonine. 5 ANK repeats span residues 1933 to 1962, 1966 to 1996, 2000 to 2029, 2033 to 2062, and 2066 to 2095; these read TGET…DANI, MGRT…DLDA, DGTT…DVNA, LGKS…NKDM, and KEET…NRDI. Residues 1953–1961 are HIF1AN-binding; that stretch reads LLEASADAN. Asn1961 is subject to (3S)-3-hydroxyasparagine; by HIF1AN; partial. Residues 2020–2028 form an HIF1AN-binding region; it reads LINSHADVN. Asn2028 carries the post-translational modification (3S)-3-hydroxyasparagine; by HIF1AN. Disordered stretches follow at residues 2157-2201, 2378-2424, and 2436-2527; these read SATQ…DSSS, QPQN…SLPV, and PTSL…EAFK. A compositionally biased stretch (low complexity) spans 2378 to 2391; that stretch reads QPQNLQPPSQPHLS. The segment covering 2436 to 2474 has biased composition (polar residues); that stretch reads PTSLPSSMVPPMTTTQFLTPPSQHSYSSSPVDNTPSHQL. The segment covering 2484–2499 has biased composition (low complexity); the sequence is PSPESPDQWSSSSPHS. Residues 2500–2520 are compositionally biased toward polar residues; it reads NISDWSEGISSPPTSMPSQIT.

Belongs to the NOTCH family. In terms of assembly, heterodimer of a C-terminal fragment N(TM) and an N-terminal fragment N(EC) which are probably linked by disulfide bonds. Interacts with DNER, DTX1, DTX2 and RBPJ/RBPSUH. Also interacts with MAML1, MAML2 and MAML3 which act as transcriptional coactivators for NOTCH1. Notch 1 intracellular domain interacts with SNW1; the interaction involves multimerized NOTCH1 NICD and is implicated in a formation of an intermediate preactivation complex which associates with DNA-bound CBF-1/RBPJ. The activated membrane-bound form interacts with AAK1 which promotes NOTCH1 stabilization. Forms a trimeric complex with FBXW7 and SGK1. Interacts with HIF1AN. HIF1AN negatively regulates the function of notch intracellular domain (NICD), accelerating myogenic differentiation. Interacts (via NICD) with SNAI1 (via zinc fingers); the interaction induces SNAI1 degradation via MDM2-mediated ubiquitination and inhibits SNAI1-induced cell invasion. Interacts (via NICD) with MDM2A. Interacts (via NICD) with BCL6; the interaction decreases MAML1 recruitment by NOTCH1 NICD on target genes DNA and inhibits NOTCH1 transactivation activity. Interacts with THBS4. Interacts (via the EGF-like repeat region) with CCN3 (via CTCK domain). Interacts (via EGF-like domains) with DLL4 (via N-terminal DSL and MNNL domains). Interacts with ZMIZ1. Interacts (via NICD domain) with MEGF10 (via the cytoplasmic domain). Interacts with DLL1 and JAG1. Interacts (via NICD domain) with PRAG1. Forms a complex with PRAG1, N1ICD and MAML1, in a MAML1-dependent manner. Interacts (via transmembrane region) with PSEN1; the interaction is direct. Interacts with ZFP64. In terms of processing, synthesized in the endoplasmic reticulum as an inactive form which is proteolytically cleaved by a furin-like convertase in the trans-Golgi network before it reaches the plasma membrane to yield an active, ligand-accessible form. Cleavage results in a C-terminal fragment N(TM) and a N-terminal fragment N(EC). Following ligand binding, it is cleaved by ADAM17 to yield a membrane-associated intermediate fragment called notch extracellular truncation (NEXT). Following endocytosis, this fragment is then cleaved by one of the catalytic subunits of gamma-secretase (PSEN1 or PSEN2) to release a Notch-derived peptide containing the intracellular domain (NICD) from the membrane. Phosphorylated. Post-translationally, O-linked glycosylation by GALNT11 is involved in determination of left/right symmetry: glycosylation promotes activation of NOTCH1, possibly by promoting cleavage by ADAM17, modulating the balance between motile and immotile (sensory) cilia at the left-right organiser (LRO). O-glycosylated on the EGF-like domains. O-glucosylated at Ser-451 by KDELC1 and KDELC2. Contains both O-linked fucose and O-linked glucose in the EGF-like domains 11, 12 and 13, which are interacting with the residues on DLL4. MFNG-, RFNG- and LFNG-mediated modification of O-fucose residues at specific EGF-like domains results in inhibition of its activation by JAG1 and enhancement of its activation by DLL1 via an increased binding to DLL1. In terms of processing, ubiquitinated. Undergoes 'Lys-29'-linked polyubiquitination by ITCH; promotes the lysosomal degradation of non-activated internalized NOTCH1. Deubiquitination by USP12 is required for transport of internalized non-activated receptor from late endosomes to lysosomes for degradation. Monoubiquitination at Lys-1765 is required for activation by gamma-secretase cleavage, it promotes interaction with AAK1, which stabilizes it. Deubiquitination by EIF3F is necessary for nuclear import of activated Notch. Hydroxylated at Asn-1961 by HIF1AN. Hydroxylated at Asn-2028 by HIF1AN. Hydroxylation reduces affinity for HI1AN and may thus indirectly modulate negative regulation of NICD.

Its subcellular location is the cell membrane. It localises to the late endosome membrane. The protein resides in the nucleus. Functionally, functions as a receptor for membrane-bound ligands Jagged-1 (JAG1), Jagged-2 (JAG2) and Delta-1 (DLL1) to regulate cell-fate determination. Upon ligand activation through the released notch intracellular domain (NICD) it forms a transcriptional activator complex with RBPJ/RBPSUH and activates genes of the enhancer of split locus. Affects the implementation of differentiation, proliferation and apoptotic programs. Involved in angiogenesis; negatively regulates endothelial cell proliferation and migration and angiogenic sprouting. Involved in the maturation of both CD4(+) and CD8(+) cells in the thymus. Important for follicular differentiation and possibly cell fate selection within the follicle. During cerebellar development, functions as a receptor for neuronal DNER and is involved in the differentiation of Bergmann glia. Represses neuronal and myogenic differentiation. May play an essential role in postimplantation development, probably in some aspect of cell specification and/or differentiation. May be involved in mesoderm development, somite formation and neurogenesis. May enhance HIF1A function by sequestering HIF1AN away from HIF1A. Required for the THBS4 function in regulating protective astrogenesis from the subventricular zone (SVZ) niche after injury. Involved in determination of left/right symmetry by modulating the balance between motile and immotile (sensory) cilia at the left-right organiser (LRO). This chain is Neurogenic locus notch homolog protein 1 (NOTCH1), found in Cricetulus griseus (Chinese hamster).